The chain runs to 282 residues: Sulfur carrier protein FdhD (282 aa).

Cys-115 functions as the Cysteine persulfide intermediate in the catalytic mechanism.

The protein belongs to the FdhD family.

The protein resides in the cytoplasm. Functionally, required for formate dehydrogenase (FDH) activity. Acts as a sulfur carrier protein that transfers sulfur from IscS to the molybdenum cofactor prior to its insertion into FDH. The sequence is that of Sulfur carrier protein FdhD from Streptomyces avermitilis (strain ATCC 31267 / DSM 46492 / JCM 5070 / NBRC 14893 / NCIMB 12804 / NRRL 8165 / MA-4680).